The following is a 66-amino-acid chain: Large ribosomal subunit protein uL30 (66 aa).

This sequence belongs to the universal ribosomal protein uL30 family. As to quaternary structure, part of the 50S ribosomal subunit.

The protein is Large ribosomal subunit protein uL30 of Brucella anthropi (strain ATCC 49188 / DSM 6882 / CCUG 24695 / JCM 21032 / LMG 3331 / NBRC 15819 / NCTC 12168 / Alc 37) (Ochrobactrum anthropi).